Here is a 506-residue protein sequence, read N- to C-terminus: Beta-glucosidase 13 (506 aa).

Residues 1–25 (MAAAGEVVMLGGILLPLLLVVAVSG) form the signal peptide. Gln-49 is a binding site for a beta-D-glucoside. Asn-118 carries N-linked (GlcNAc...) asparagine glycosylation. A beta-D-glucoside is bound by residues His-153 and 198-199 (NE). The active-site Proton donor is the Glu-199. A disulfide bridge links Cys-219 with Cys-226. N-linked (GlcNAc...) asparagine glycosylation is present at Asn-225. Residue Tyr-342 coordinates a beta-D-glucoside. N-linked (GlcNAc...) asparagine glycans are attached at residues Asn-357 and Asn-367. Glu-413 lines the a beta-D-glucoside pocket. Glu-413 (nucleophile) is an active-site residue. An N-linked (GlcNAc...) asparagine glycan is attached at Asn-421. A beta-D-glucoside-binding positions include Trp-462, 469-470 (EW), and Phe-478.

It belongs to the glycosyl hydrolase 1 family.

The enzyme catalyses Hydrolysis of terminal, non-reducing beta-D-glucosyl residues with release of beta-D-glucose.. This chain is Beta-glucosidase 13 (BGLU13), found in Oryza sativa subsp. japonica (Rice).